The sequence spans 470 residues: Serine--tRNA ligase (470 aa).

272–274 (TAE) lines the L-serine pocket. ATP is bound at residue 303–305 (RAE). E326 is a binding site for L-serine. 393–396 (EISS) is an ATP binding site. S428 provides a ligand contact to L-serine.

The protein belongs to the class-II aminoacyl-tRNA synthetase family. Type-1 seryl-tRNA synthetase subfamily. Homodimer. The tRNA molecule binds across the dimer.

The protein localises to the cytoplasm. It carries out the reaction tRNA(Ser) + L-serine + ATP = L-seryl-tRNA(Ser) + AMP + diphosphate + H(+). The catalysed reaction is tRNA(Sec) + L-serine + ATP = L-seryl-tRNA(Sec) + AMP + diphosphate + H(+). Its pathway is aminoacyl-tRNA biosynthesis; selenocysteinyl-tRNA(Sec) biosynthesis; L-seryl-tRNA(Sec) from L-serine and tRNA(Sec): step 1/1. In terms of biological role, catalyzes the attachment of serine to tRNA(Ser). Is also able to aminoacylate tRNA(Sec) with serine, to form the misacylated tRNA L-seryl-tRNA(Sec), which will be further converted into selenocysteinyl-tRNA(Sec). In Nitrobacter hamburgensis (strain DSM 10229 / NCIMB 13809 / X14), this protein is Serine--tRNA ligase.